An 81-amino-acid chain; its full sequence is MSHSVKIYDTCIGCTQCVRACPLDVLEMVPWDGNKAGTIASSPRTEDCVGCKRCETACPTDFLSIRVYLGAETTRSMGLAY.

4Fe-4S ferredoxin-type domains are found at residues 2 to 31 (SHSV…MVPW) and 39 to 68 (IASS…IRVY). [4Fe-4S] cluster-binding residues include Cys11, Cys14, Cys17, Cys21, Cys48, Cys51, Cys54, and Cys58.

The G.violaceus PSI reaction center is composed of one copy each of PsaA,B,C,D,E,F,L,M and Z, and forms trimeric complexes. Requires [4Fe-4S] cluster as cofactor.

It localises to the cell inner membrane. The catalysed reaction is reduced [plastocyanin] + hnu + oxidized [2Fe-2S]-[ferredoxin] = oxidized [plastocyanin] + reduced [2Fe-2S]-[ferredoxin]. Functionally, apoprotein for the two 4Fe-4S centers FA and FB of photosystem I (PSI); essential for photochemical activity. FB is the terminal electron acceptor of PSI, donating electrons to ferredoxin. The C-terminus interacts with PsaA/B/D and helps assemble the protein into the PSI complex. Required for binding of PsaD and PsaE to PSI. PSI is a plastocyanin/cytochrome c6-ferredoxin oxidoreductase, converting photonic excitation into a charge separation, which transfers an electron from the donor P700 chlorophyll pair to the spectroscopically characterized acceptors A0, A1, FX, FA and FB in turn. This Gloeobacter violaceus (strain ATCC 29082 / PCC 7421) protein is Photosystem I iron-sulfur center.